A 402-amino-acid polypeptide reads, in one-letter code: UDP-glucose 6-dehydrogenase (402 aa).

NAD(+) contacts are provided by residues 2–19 (KIAV…GVLL), V11, D29, K34, T83, T118, and E145. Substrate contacts are provided by residues 141 to 145 (EFLRE), K204, N208, 249 to 253 (YNNPS), and G257. Y259 provides a ligand contact to NAD(+). Catalysis depends on C260, which acts as the Nucleophile. Residue K263 coordinates NAD(+). Position 320 (K320) interacts with substrate. Position 327 (R327) interacts with NAD(+).

The protein belongs to the UDP-glucose/GDP-mannose dehydrogenase family.

It catalyses the reaction UDP-alpha-D-glucose + 2 NAD(+) + H2O = UDP-alpha-D-glucuronate + 2 NADH + 3 H(+). It participates in nucleotide-sugar biosynthesis; UDP-alpha-D-glucuronate biosynthesis; UDP-alpha-D-glucuronate from UDP-alpha-D-glucose: step 1/1. In terms of biological role, catalyzes the formation of UDP-glucuronic acid which is required for capsular hyaluronic acid synthesis. In Streptococcus pyogenes serotype M3 (strain ATCC BAA-595 / MGAS315), this protein is UDP-glucose 6-dehydrogenase (hasB).